A 573-amino-acid chain; its full sequence is Membrane protein insertase YidC (573 aa).

Residues 6-26 form a helical membrane-spanning segment; the sequence is VFLIFAWLMVAALLWMEWGKD. Positions 63 to 82 are disordered; that stretch reads PQAGSPAAVPATSTTTATPA. 5 helical membrane passes run 355–375, 379–399, 446–466, 488–508, and 524–544; these read FSIMAIIGQGLFWVLSHLHSF, WGWAIIGLVVLLRLALYPLSA, GGCLPLLIQMPIFFALYWVLV, PYFILPVLNIAIMWATQKLTP, and PLVFGVMMAFMPAGLVLYWVV.

It belongs to the OXA1/ALB3/YidC family. Type 1 subfamily. As to quaternary structure, interacts with the Sec translocase complex via SecD. Specifically interacts with transmembrane segments of nascent integral membrane proteins during membrane integration.

The protein localises to the cell inner membrane. Its function is as follows. Required for the insertion and/or proper folding and/or complex formation of integral membrane proteins into the membrane. Involved in integration of membrane proteins that insert both dependently and independently of the Sec translocase complex, as well as at least some lipoproteins. Aids folding of multispanning membrane proteins. The chain is Membrane protein insertase YidC from Xanthomonas campestris pv. campestris (strain 8004).